A 148-amino-acid chain; its full sequence is Deoxyuridine 5'-triphosphate nucleotidohydrolase (148 aa).

Substrate contacts are provided by residues Arg-67–Gly-69, Asn-80, Leu-84–Asp-86, and Met-94.

This sequence belongs to the dUTPase family. The cofactor is Mg(2+).

It carries out the reaction dUTP + H2O = dUMP + diphosphate + H(+). It participates in pyrimidine metabolism; dUMP biosynthesis; dUMP from dCTP (dUTP route): step 2/2. This enzyme is involved in nucleotide metabolism: it produces dUMP, the immediate precursor of thymidine nucleotides and it decreases the intracellular concentration of dUTP so that uracil cannot be incorporated into DNA. This chain is Deoxyuridine 5'-triphosphate nucleotidohydrolase, found in Burkholderia ambifaria (strain MC40-6).